Consider the following 857-residue polypeptide: Glucans biosynthesis glucosyltransferase H (857 aa).

6 consecutive transmembrane segments (helical) span residues 142 to 162 (ILLA…KGIL), 196 to 216 (ILIL…TALM), 515 to 535 (VFLT…FLVL), 572 to 592 (LFST…ILIW), 606 to 626 (TLSM…RMIF), and 682 to 702 (FLWW…VSVI).

The protein belongs to the glycosyltransferase 2 family. OpgH subfamily.

It localises to the cell inner membrane. Its pathway is glycan metabolism; osmoregulated periplasmic glucan (OPG) biosynthesis. Functionally, involved in the biosynthesis of osmoregulated periplasmic glucans (OPGs). This chain is Glucans biosynthesis glucosyltransferase H, found in Pseudomonas putida (strain ATCC 700007 / DSM 6899 / JCM 31910 / BCRC 17059 / LMG 24140 / F1).